A 141-amino-acid chain; its full sequence is Hemoglobin subunit alpha (141 aa).

Residues 1–141 (VLSAADKTHV…VSTVLVSKYR (141 aa)) enclose the Globin domain. Residue S3 is modified to Phosphoserine. The residue at position 7 (K7) is an N6-succinyllysine. Phosphothreonine is present on T8. N6-succinyllysine is present on K11. At K16 the chain carries N6-acetyllysine; alternate. K16 carries the post-translational modification N6-succinyllysine; alternate. At S35 the chain carries Phosphoserine. K40 carries the post-translational modification N6-succinyllysine. The residue at position 49 (S49) is a Phosphoserine. H58 provides a ligand contact to O2. H87 is a heme b binding site. Phosphoserine is present on S102. T108 carries the post-translational modification Phosphothreonine. S124 bears the Phosphoserine mark. T134 carries the post-translational modification Phosphothreonine. Residue S138 is modified to Phosphoserine.

It belongs to the globin family. As to quaternary structure, heterotetramer of two alpha chains and two beta chains. Red blood cells.

Its function is as follows. Involved in oxygen transport from the lung to the various peripheral tissues. Functionally, hemopressin acts as an antagonist peptide of the cannabinoid receptor CNR1. Hemopressin-binding efficiently blocks cannabinoid receptor CNR1 and subsequent signaling. This chain is Hemoglobin subunit alpha (HBA), found in Dasypus novemcinctus (Nine-banded armadillo).